The sequence spans 423 residues: Diels-Alderase pyiF (423 aa).

The first 17 residues, 1–17, serve as a signal peptide directing secretion; sequence MLPSFIFVYSLLATATA. N-linked (GlcNAc...) asparagine glycans are attached at residues Asn60, Asn92, and Asn219.

Belongs to the Diels-Alderase family.

It participates in mycotoxin biosynthesis. Functionally, diels-Alderase; part of the gene cluster that mediates the biosynthesis of the mycotoxin pyrichalasin H, a tyrosine-derived cytochalasan that inhibits the growth of rice seedlings, but also inhibits lymphocyte capping and actin polymerization and alters cell morphology. Pyrichalasin H is indicated as the responsible agent for the genus-specific pathogenicity of M.grisea toward crabgrass. The first step in the pathway is catalyzed by the O-methyltransferase pyiA which methylates free tyrosine to generate the precursor O-methyltyrosine. The hybrid PKS-NRPS pyiS, assisted by the enoyl reductase pyiC, are responsible for fusion of the O-methyltyrosine precursor and the polyketide backbone. The polyketide synthase module (PKS) of pyiS is responsible for the synthesis of the polyketide backbone and the downstream nonribosomal peptide synthetase (NRPS) amidates the carboxyl end of the polyketide with the O-methyltyrosine precursor. As the NRPS A-domain demonstrates substrate tolerance, pyiS can also use phenylalanine, tyrosine and even para-chlorophenylalanine as amino acid precursor, which leads to the production of novel cytochalasans, including halogenated cytochalasans. Because pyiS lacks a designated enoylreductase (ER) domain, the required activity is provided the enoyl reductase pyiC. Reduction by the hydrolyase pyiE leads to 1,5-dihydropyrrolone, which is substrate for dehydration and intra-molecular Diels-Alder cyclization by the Diels-Alderase pyiF to yield the required isoindolone-fused macrocycle. The tailoring cytochrome P450 monooxygenases piyD and piyG catalyze the hydroxylation at C-18 and C-7, respectivily, whereas the short-chain dehydrogenase/reductase pyiH reduces the carbonyl at C-21 in preparation for the transfer of an acetyl group by the acetyltransferase pyiB. These 3 reactions whose order is not clear yet, lead to the production of O-methylpyrichalasin J, a deacetylated pyrichalasin H. Finally, pyiB to converts O-methylpyrichalasin J into the final product pyrichalasin H via acetylation of C-21. This is Diels-Alderase pyiF from Pyricularia grisea (Crabgrass-specific blast fungus).